A 79-amino-acid chain; its full sequence is Acyl carrier protein (79 aa).

Residues 2–77 (DNIEQRVKKI…LAIDFAKSKA (76 aa)) form the Carrier domain. Ser37 carries the post-translational modification O-(pantetheine 4'-phosphoryl)serine.

The protein belongs to the acyl carrier protein (ACP) family. 4'-phosphopantetheine is transferred from CoA to a specific serine of apo-ACP by AcpS. This modification is essential for activity because fatty acids are bound in thioester linkage to the sulfhydryl of the prosthetic group.

It localises to the cytoplasm. Its pathway is lipid metabolism; fatty acid biosynthesis. Carrier of the growing fatty acid chain in fatty acid biosynthesis. This is Acyl carrier protein from Polynucleobacter necessarius subsp. necessarius (strain STIR1).